Consider the following 183-residue polypeptide: MQPYIELVRRYVYRRILIEFGDDELGKLAVAIFNTLLSRGEAMTDDKLTSIVGYNAIDVRRILQALYNMRLASVVEEFNEAAGRIEQSWSIKDEDIRRFLINLIGGVLDKVGVLMQQLTNTPIYICPKCFKRYSEDDALMYDYKCPLDRTPLEYINPADYLTVLGAVEARLKKMMESVSKGSV.

The HTH TFE/IIEalpha-type domain occupies 4–97 (YIELVRRYVY…SWSIKDEDIR (94 aa)).

The protein belongs to the TFE family. In terms of assembly, monomer. Interaction with RNA polymerase subunits RpoF and RpoE is necessary for Tfe stimulatory transcription activity. Able to interact with Tbp and RNA polymerase in the absence of DNA promoter. Interacts both with the preinitiation and elongation complexes.

Functionally, transcription factor that plays a role in the activation of archaeal genes transcribed by RNA polymerase. Facilitates transcription initiation by enhancing TATA-box recognition by TATA-box-binding protein (Tbp), and transcription factor B (Tfb) and RNA polymerase recruitment. Not absolutely required for transcription in vitro, but particularly important in cases where Tbp or Tfb function is not optimal. It dynamically alters the nucleic acid-binding properties of RNA polymerases by stabilizing the initiation complex and destabilizing elongation complexes. Seems to translocate with the RNA polymerase following initiation and acts by binding to the non template strand of the transcription bubble in elongation complexes. This Caldivirga maquilingensis (strain ATCC 700844 / DSM 13496 / JCM 10307 / IC-167) protein is Transcription factor E.